The primary structure comprises 387 residues: Alanine racemase (387 aa).

Lys-38 functions as the Proton acceptor; specific for D-alanine in the catalytic mechanism. N6-(pyridoxal phosphate)lysine is present on Lys-38. Arg-136 contributes to the substrate binding site. Tyr-267 (proton acceptor; specific for L-alanine) is an active-site residue. Met-316 is a substrate binding site.

Belongs to the alanine racemase family. Pyridoxal 5'-phosphate is required as a cofactor.

It carries out the reaction L-alanine = D-alanine. It functions in the pathway amino-acid biosynthesis; D-alanine biosynthesis; D-alanine from L-alanine: step 1/1. Functionally, catalyzes the interconversion of L-alanine and D-alanine. May also act on other amino acids. This is Alanine racemase (alr) from Clostridium tetani (strain Massachusetts / E88).